The primary structure comprises 795 residues: Delta-1-pyrroline-5-carboxylate synthase (795 aa).

The interval 1–361 (MLSQVYRYGF…FFSEVKPAGP (361 aa)) is glutamate 5-kinase. 3 residues coordinate substrate: S117, D223, and N246. Residues 266–267 (SD) and 305–311 (MGGMEAK) contribute to the ATP site. An N6-succinyllysine mark is found at K311, K347, and K550. Residues 362 to 795 (TVEQQGEMAR…NLPIPQRNTN (434 aa)) are gamma-glutamyl phosphate reductase.

The protein in the N-terminal section; belongs to the glutamate 5-kinase family. It in the C-terminal section; belongs to the gamma-glutamyl phosphate reductase family. As to quaternary structure, can form homodimers/multimers.

The protein localises to the mitochondrion matrix. It catalyses the reaction L-glutamate + ATP = L-glutamyl 5-phosphate + ADP. The catalysed reaction is L-glutamate 5-semialdehyde + phosphate + NADP(+) = L-glutamyl 5-phosphate + NADPH + H(+). Its pathway is amino-acid biosynthesis; L-proline biosynthesis; L-glutamate 5-semialdehyde from L-glutamate: step 1/2. It functions in the pathway amino-acid biosynthesis; L-proline biosynthesis; L-glutamate 5-semialdehyde from L-glutamate: step 2/2. Bifunctional enzyme that converts glutamate to glutamate 5-semialdehyde, an intermediate in the biosynthesis of proline, ornithine and arginine. This chain is Delta-1-pyrroline-5-carboxylate synthase (ALDH18A1), found in Pongo abelii (Sumatran orangutan).